A 57-amino-acid chain; its full sequence is Large ribosomal subunit protein bL32 (57 aa).

Residues 1-16 show a composition bias toward basic residues; that stretch reads MAVQKSRKTRSKRGMR. Residues 1–45 form a disordered region; that stretch reads MAVQKSRKTRSKRGMRRSHDALTAPAQLSVDATSGETHRRHHMTA.

This sequence belongs to the bacterial ribosomal protein bL32 family.

The chain is Large ribosomal subunit protein bL32 from Psychromonas ingrahamii (strain DSM 17664 / CCUG 51855 / 37).